A 323-amino-acid chain; its full sequence is tRNA U34 carboxymethyltransferase (323 aa).

Carboxy-S-adenosyl-L-methionine contacts are provided by residues lysine 91, tryptophan 105, lysine 110, glycine 130, 181–182 (IE), methionine 196, tyrosine 200, and arginine 315.

It belongs to the class I-like SAM-binding methyltransferase superfamily. CmoB family. As to quaternary structure, homotetramer.

It carries out the reaction carboxy-S-adenosyl-L-methionine + 5-hydroxyuridine(34) in tRNA = 5-carboxymethoxyuridine(34) in tRNA + S-adenosyl-L-homocysteine + H(+). In terms of biological role, catalyzes carboxymethyl transfer from carboxy-S-adenosyl-L-methionine (Cx-SAM) to 5-hydroxyuridine (ho5U) to form 5-carboxymethoxyuridine (cmo5U) at position 34 in tRNAs. The sequence is that of tRNA U34 carboxymethyltransferase from Yersinia pseudotuberculosis serotype IB (strain PB1/+).